Here is a 118-residue protein sequence, read N- to C-terminus: Large ribosomal subunit protein uL18 (118 aa).

The protein belongs to the universal ribosomal protein uL18 family. In terms of assembly, part of the 50S ribosomal subunit; part of the 5S rRNA/L5/L18/L25 subcomplex. Contacts the 5S and 23S rRNAs.

Functionally, this is one of the proteins that bind and probably mediate the attachment of the 5S RNA into the large ribosomal subunit, where it forms part of the central protuberance. This is Large ribosomal subunit protein uL18 from Campylobacter lari (strain RM2100 / D67 / ATCC BAA-1060).